A 222-amino-acid polypeptide reads, in one-letter code: Phosphoribosylformylglycinamidine synthase subunit PurQ (222 aa).

The Glutamine amidotransferase type-1 domain maps to 3–222 (SAVVLLPGLN…LFEGALGIAA (220 aa)). Cys86 (nucleophile) is an active-site residue. Catalysis depends on residues His196 and Glu198.

In terms of assembly, part of the FGAM synthase complex composed of 1 PurL, 1 PurQ and 2 PurS subunits.

It localises to the cytoplasm. The catalysed reaction is N(2)-formyl-N(1)-(5-phospho-beta-D-ribosyl)glycinamide + L-glutamine + ATP + H2O = 2-formamido-N(1)-(5-O-phospho-beta-D-ribosyl)acetamidine + L-glutamate + ADP + phosphate + H(+). It carries out the reaction L-glutamine + H2O = L-glutamate + NH4(+). The protein operates within purine metabolism; IMP biosynthesis via de novo pathway; 5-amino-1-(5-phospho-D-ribosyl)imidazole from N(2)-formyl-N(1)-(5-phospho-D-ribosyl)glycinamide: step 1/2. Functionally, part of the phosphoribosylformylglycinamidine synthase complex involved in the purines biosynthetic pathway. Catalyzes the ATP-dependent conversion of formylglycinamide ribonucleotide (FGAR) and glutamine to yield formylglycinamidine ribonucleotide (FGAM) and glutamate. The FGAM synthase complex is composed of three subunits. PurQ produces an ammonia molecule by converting glutamine to glutamate. PurL transfers the ammonia molecule to FGAR to form FGAM in an ATP-dependent manner. PurS interacts with PurQ and PurL and is thought to assist in the transfer of the ammonia molecule from PurQ to PurL. This chain is Phosphoribosylformylglycinamidine synthase subunit PurQ, found in Mesorhizobium japonicum (strain LMG 29417 / CECT 9101 / MAFF 303099) (Mesorhizobium loti (strain MAFF 303099)).